Here is a 269-residue protein sequence, read N- to C-terminus: Cytolethal distending toxin subunit B (269 aa).

The N-terminal stretch at 1–18 (MKKYIISLIVFLSFYAQA) is a signal peptide. The short motif at 195 to 210 (REPADLEMNLTVPVRR) is the Nuclear localization signal element.

Heterotrimer of 3 subunits, CdtA, CdtB and CdtC.

It is found in the secreted. Its function is as follows. Part of the tripartite complex that is required for the CDT activity. CdtB exhibits a DNA-nicking endonuclease activity, and very probably causes DNA damage in intoxicated cells. This damage induces G2/M cell cycle arrest, chromatin fragmentation, cell distention and nucleus enlargement. This chain is Cytolethal distending toxin subunit B (cdtB), found in Escherichia coli.